The primary structure comprises 72 residues: Cytochrome c oxidase subunit 8C, mitochondrial (72 aa).

The N-terminal 29 residues, 1–29 (MSRLLLLCSSLLRHRAVLFSKPGHPGRLS), are a transit peptide targeting the mitochondrion. Over 30-40 (HSESPQKKILS) the chain is Mitochondrial matrix. A helical transmembrane segment spans residues 41–64 (PTESAVGIVVFFTTFYIPAAYVLS). Topologically, residues 65–72 (SLKYFKGE) are mitochondrial intermembrane.

The protein belongs to the cytochrome c oxidase VIII family. Component of the cytochrome c oxidase (complex IV, CIV), a multisubunit enzyme composed of 14 subunits. The complex is composed of a catalytic core of 3 subunits MT-CO1, MT-CO2 and MT-CO3, encoded in the mitochondrial DNA, and 11 supernumerary subunits COX4I, COX5A, COX5B, COX6A, COX6B, COX6C, COX7A, COX7B, COX7C, COX8 and NDUFA4, which are encoded in the nuclear genome. The complex exists as a monomer or a dimer and forms supercomplexes (SCs) in the inner mitochondrial membrane with NADH-ubiquinone oxidoreductase (complex I, CI) and ubiquinol-cytochrome c oxidoreductase (cytochrome b-c1 complex, complex III, CIII), resulting in different assemblies (supercomplex SCI(1)III(2)IV(1) and megacomplex MCI(2)III(2)IV(2)).

The protein localises to the mitochondrion inner membrane. It participates in energy metabolism; oxidative phosphorylation. Component of the cytochrome c oxidase, the last enzyme in the mitochondrial electron transport chain which drives oxidative phosphorylation. The respiratory chain contains 3 multisubunit complexes succinate dehydrogenase (complex II, CII), ubiquinol-cytochrome c oxidoreductase (cytochrome b-c1 complex, complex III, CIII) and cytochrome c oxidase (complex IV, CIV), that cooperate to transfer electrons derived from NADH and succinate to molecular oxygen, creating an electrochemical gradient over the inner membrane that drives transmembrane transport and the ATP synthase. Cytochrome c oxidase is the component of the respiratory chain that catalyzes the reduction of oxygen to water. Electrons originating from reduced cytochrome c in the intermembrane space (IMS) are transferred via the dinuclear copper A center (CU(A)) of subunit 2 and heme A of subunit 1 to the active site in subunit 1, a binuclear center (BNC) formed by heme A3 and copper B (CU(B)). The BNC reduces molecular oxygen to 2 water molecules using 4 electrons from cytochrome c in the IMS and 4 protons from the mitochondrial matrix. This Mus musculus (Mouse) protein is Cytochrome c oxidase subunit 8C, mitochondrial (Cox8c).